The sequence spans 154 residues: Prefoldin subunit alpha (154 aa).

Residues 123 to 154 (EAEQLEQQAQQAQQQMMQQQMQAQQQPQDGEQ) form a disordered region. Residues 127–154 (LEQQAQQAQQQMMQQQMQAQQQPQDGEQ) show a composition bias toward low complexity.

Belongs to the prefoldin alpha subunit family. Heterohexamer of two alpha and four beta subunits.

Its subcellular location is the cytoplasm. Functionally, molecular chaperone capable of stabilizing a range of proteins. Seems to fulfill an ATP-independent, HSP70-like function in archaeal de novo protein folding. This is Prefoldin subunit alpha from Halobacterium salinarum (strain ATCC 29341 / DSM 671 / R1).